Consider the following 139-residue polypeptide: Cytochrome c2 (139 aa).

Positions 1–25 are cleaved as a signal peptide; the sequence is MVKKLLTILSIAATAGSLSIGTASA. Glutamine 26 carries the pyrrolidone carboxylic acid modification. Positions 38, 41, 42, and 118 each coordinate heme c.

Belongs to the cytochrome c family. In terms of processing, binds 1 heme c group covalently per subunit.

Its function is as follows. Cytochrome c2 is found mainly in purple, non-sulfur, photosynthetic bacteria where it functions as the electron donor to the oxidized bacteriochlorophyll in the photophosphorylation pathway. However, it may also have a role in the respiratory chain and is found in some non-photosynthetic bacteria. This Rhodopseudomonas palustris (strain ATCC BAA-98 / CGA009) protein is Cytochrome c2 (cycA).